Consider the following 323-residue polypeptide: Pantothenate kinase (323 aa).

101-108 (GSVAVGKS) serves as a coordination point for ATP.

It belongs to the prokaryotic pantothenate kinase family.

The protein localises to the cytoplasm. The enzyme catalyses (R)-pantothenate + ATP = (R)-4'-phosphopantothenate + ADP + H(+). It participates in cofactor biosynthesis; coenzyme A biosynthesis; CoA from (R)-pantothenate: step 1/5. This Paenarthrobacter aurescens (strain TC1) protein is Pantothenate kinase.